The primary structure comprises 137 residues: MPTINQLVRKPRQSKSKKSDSPALNRNFNSKKKKFTDLNSPQKRGVCTRVGTMTPKKPNSALRKYARVRLSNNIEINAYIPGIGHNLQEHSVVLVRGGRVKDLPGVRYHIVRGALDTSGVDGRRQGRSLYGTKKPKK.

Residues 1–55 (MPTINQLVRKPRQSKSKKSDSPALNRNFNSKKKKFTDLNSPQKRGVCTRVGTMTP) are disordered. D102 carries the post-translational modification 3-methylthioaspartic acid. The disordered stretch occupies residues 118–137 (SGVDGRRQGRSLYGTKKPKK).

The protein belongs to the universal ribosomal protein uS12 family. In terms of assembly, part of the 30S ribosomal subunit. Contacts proteins S8 and S17. May interact with IF1 in the 30S initiation complex.

Functionally, with S4 and S5 plays an important role in translational accuracy. In terms of biological role, interacts with and stabilizes bases of the 16S rRNA that are involved in tRNA selection in the A site and with the mRNA backbone. Located at the interface of the 30S and 50S subunits, it traverses the body of the 30S subunit contacting proteins on the other side and probably holding the rRNA structure together. The combined cluster of proteins S8, S12 and S17 appears to hold together the shoulder and platform of the 30S subunit. This is Small ribosomal subunit protein uS12 from Staphylococcus saprophyticus subsp. saprophyticus (strain ATCC 15305 / DSM 20229 / NCIMB 8711 / NCTC 7292 / S-41).